Consider the following 149-residue polypeptide: D-aminoacyl-tRNA deacylase (149 aa).

A Gly-cisPro motif, important for rejection of L-amino acids motif is present at residues 137–138 (GP).

Belongs to the DTD family. Homodimer.

Its subcellular location is the cytoplasm. The catalysed reaction is glycyl-tRNA(Ala) + H2O = tRNA(Ala) + glycine + H(+). The enzyme catalyses a D-aminoacyl-tRNA + H2O = a tRNA + a D-alpha-amino acid + H(+). In terms of biological role, an aminoacyl-tRNA editing enzyme that deacylates mischarged D-aminoacyl-tRNAs. Also deacylates mischarged glycyl-tRNA(Ala), protecting cells against glycine mischarging by AlaRS. Acts via tRNA-based rather than protein-based catalysis; rejects L-amino acids rather than detecting D-amino acids in the active site. By recycling D-aminoacyl-tRNA to D-amino acids and free tRNA molecules, this enzyme counteracts the toxicity associated with the formation of D-aminoacyl-tRNA entities in vivo and helps enforce protein L-homochirality. This Anaeromyxobacter dehalogenans (strain 2CP-C) protein is D-aminoacyl-tRNA deacylase.